The chain runs to 155 residues: Transcriptional repressor NrdR (155 aa).

The interval 1–22 (MRCPFCGHDETQVKDSRPSEDG) is disordered. A zinc finger spans residues 3–34 (CPFCGHDETQVKDSRPSEDGAAIRRRRLCPQC). Over residues 7 to 22 (GHDETQVKDSRPSEDG) the composition is skewed to basic and acidic residues. Residues 49-139 (ITILKRSGRR…VYRDFRETQD (91 aa)) form the ATP-cone domain.

It belongs to the NrdR family. It depends on Zn(2+) as a cofactor.

Its function is as follows. Negatively regulates transcription of bacterial ribonucleotide reductase nrd genes and operons by binding to NrdR-boxes. This Phenylobacterium zucineum (strain HLK1) protein is Transcriptional repressor NrdR.